The following is a 1109-amino-acid chain: Carbamoyl phosphate synthase large chain (1109 aa).

A carboxyphosphate synthetic domain region spans residues 1–402; that stretch reads MPKRTDLKSV…ALQKALRSLE (402 aa). ATP-binding residues include Arg129, Arg169, Gly175, Gly176, Glu208, Ile210, Glu215, Gly241, Val242, His243, Gln285, and Glu299. Positions 133-328 constitute an ATP-grasp 1 domain; sequence KGVVERCGAE…IAKIATKLSL (196 aa). The Mg(2+) site is built by Gln285, Glu299, and Asn301. Mn(2+) is bound by residues Gln285, Glu299, and Asn301. The segment at 403–546 is oligomerization domain; it reads QKGSQLDFSS…YHYSAYDEED (144 aa). A carbamoyl phosphate synthetic domain region spans residues 547–950; it reads EVALHSKPSI…AFAKSQAGAN (404 aa). In terms of domain architecture, ATP-grasp 2 spans 677–868; it reads SRVLDKAGLV…MAKAAALIGT (192 aa). ATP contacts are provided by Arg713, Arg752, Leu754, Glu759, Gly784, Ile785, His786, Ser787, Gln827, and Glu839. Mg(2+) is bound by residues Gln827, Glu839, and Asn841. Gln827, Glu839, and Asn841 together coordinate Mn(2+). The MGS-like domain occupies 951 to 1096; that stretch reads NALPTEGKVF…QEHAAALGES (146 aa). Residues 951–1109 form an allosteric domain region; the sequence is NALPTEGKVF…AAAKADLQHA (159 aa).

It belongs to the CarB family. In terms of assembly, composed of two chains; the small (or glutamine) chain promotes the hydrolysis of glutamine to ammonia, which is used by the large (or ammonia) chain to synthesize carbamoyl phosphate. Tetramer of heterodimers (alpha,beta)4. Mg(2+) is required as a cofactor. The cofactor is Mn(2+).

The enzyme catalyses hydrogencarbonate + L-glutamine + 2 ATP + H2O = carbamoyl phosphate + L-glutamate + 2 ADP + phosphate + 2 H(+). It carries out the reaction hydrogencarbonate + NH4(+) + 2 ATP = carbamoyl phosphate + 2 ADP + phosphate + 2 H(+). The protein operates within amino-acid biosynthesis; L-arginine biosynthesis; carbamoyl phosphate from bicarbonate: step 1/1. It functions in the pathway pyrimidine metabolism; UMP biosynthesis via de novo pathway; (S)-dihydroorotate from bicarbonate: step 1/3. In terms of biological role, large subunit of the glutamine-dependent carbamoyl phosphate synthetase (CPSase). CPSase catalyzes the formation of carbamoyl phosphate from the ammonia moiety of glutamine, carbonate, and phosphate donated by ATP, constituting the first step of 2 biosynthetic pathways, one leading to arginine and/or urea and the other to pyrimidine nucleotides. The large subunit (synthetase) binds the substrates ammonia (free or transferred from glutamine from the small subunit), hydrogencarbonate and ATP and carries out an ATP-coupled ligase reaction, activating hydrogencarbonate by forming carboxy phosphate which reacts with ammonia to form carbamoyl phosphate. This chain is Carbamoyl phosphate synthase large chain, found in Pseudarthrobacter chlorophenolicus (strain ATCC 700700 / DSM 12829 / CIP 107037 / JCM 12360 / KCTC 9906 / NCIMB 13794 / A6) (Arthrobacter chlorophenolicus).